The primary structure comprises 524 residues: Translation initiation factor eIF2B subunit delta (524 aa).

Residues 1–173 (MATAAVAVRE…ERQQVPTRKD (173 aa)) are disordered. The residue at position 2 (A2) is an N-acetylalanine. S12 carries the phosphoserine modification. Over residues 26-40 (AEGREMTQEEKLQLR) the composition is skewed to basic and acidic residues. Over residues 41–51 (KEKKQQKKKRK) the composition is skewed to basic residues. T86 is subject to Phosphothreonine. 2 stretches are compositionally biased toward basic and acidic residues: residues 87–121 (AKEK…RKGD) and 161–173 (KKPE…TRKD). The interval 171 to 180 (RKDYGSKVSL) is may bind the chemical integrated stress response (ISR) inhibitor ISRIB.

Belongs to the eIF-2B alpha/beta/delta subunits family. In terms of assembly, component of the translation initiation factor 2B (eIF2B) complex which is a heterodecamer of two sets of five different subunits: alpha, beta, gamma, delta and epsilon. Subunits alpha, beta and delta comprise a regulatory subcomplex and subunits epsilon and gamma comprise a catalytic subcomplex. Within the complex, the hexameric regulatory complex resides at the center, with the two heterodimeric catalytic subcomplexes bound on opposite sides.

It is found in the cytoplasm. The protein resides in the cytosol. Activated by the chemical integrated stress response (ISR) inhibitor ISRIB which stimulates guanine nucleotide exchange factor activity for both phosphorylated and unphosphorylated eIF2. Acts as a component of the translation initiation factor 2B (eIF2B) complex, which catalyzes the exchange of GDP for GTP on eukaryotic initiation factor 2 (eIF2) gamma subunit. Its guanine nucleotide exchange factor activity is repressed when bound to eIF2 complex phosphorylated on the alpha subunit, thereby limiting the amount of methionyl-initiator methionine tRNA available to the ribosome and consequently global translation is repressed. This is Translation initiation factor eIF2B subunit delta (EIF2B4) from Bos taurus (Bovine).